The chain runs to 338 residues: Photosystem II assembly lipoprotein Ycf48 (338 aa).

Positions 1 to 23 (MKRLFSNVINLTLVLIVGVALSG) are cleaved as a signal peptide. C24 carries N-palmitoyl cysteine lipidation. A lipid anchor (S-diacylglycerol cysteine) is attached at C24.

The protein belongs to the Ycf48 family. Part of early PSII assembly complexes which includes D1 (psbA) and PsbI; not found in mature PSII. Binds to the lumenal side of PSII complexes. Interacts with YidC.

Its subcellular location is the cellular thylakoid membrane. In terms of biological role, a factor required for optimal assembly of photosystem II (PSII), acting in the early stages of PSII assembly. Also plays a role in replacement of photodamaged D1 (psbA). Assists YidC in synthesis of chlorophyll-binding proteins. This chain is Photosystem II assembly lipoprotein Ycf48, found in Prochlorococcus marinus (strain NATL2A).